We begin with the raw amino-acid sequence, 129 residues long: Glycine cleavage system H protein (129 aa).

One can recognise a Lipoyl-binding domain in the interval 24–106; that stretch reads LVRVGLSAYA…HGEGWLLVIR (83 aa). Lysine 65 carries the N6-lipoyllysine modification.

Belongs to the GcvH family. The glycine cleavage system is composed of four proteins: P, T, L and H. (R)-lipoate is required as a cofactor.

Its function is as follows. The glycine cleavage system catalyzes the degradation of glycine. The H protein shuttles the methylamine group of glycine from the P protein to the T protein. The sequence is that of Glycine cleavage system H protein from Synechococcus sp. (strain CC9311).